The sequence spans 557 residues: Dihydroxy-acid dehydratase (557 aa).

Aspartate 78 provides a ligand contact to Mg(2+). Position 119 (cysteine 119) interacts with [2Fe-2S] cluster. Aspartate 120 and lysine 121 together coordinate Mg(2+). Residue lysine 121 is modified to N6-carboxylysine. Cysteine 192 provides a ligand contact to [2Fe-2S] cluster. Glutamate 442 provides a ligand contact to Mg(2+). Serine 468 serves as the catalytic Proton acceptor.

The protein belongs to the IlvD/Edd family. In terms of assembly, homodimer. [2Fe-2S] cluster serves as cofactor. It depends on Mg(2+) as a cofactor.

It catalyses the reaction (2R)-2,3-dihydroxy-3-methylbutanoate = 3-methyl-2-oxobutanoate + H2O. It carries out the reaction (2R,3R)-2,3-dihydroxy-3-methylpentanoate = (S)-3-methyl-2-oxopentanoate + H2O. It participates in amino-acid biosynthesis; L-isoleucine biosynthesis; L-isoleucine from 2-oxobutanoate: step 3/4. The protein operates within amino-acid biosynthesis; L-valine biosynthesis; L-valine from pyruvate: step 3/4. Its function is as follows. Functions in the biosynthesis of branched-chain amino acids. Catalyzes the dehydration of (2R,3R)-2,3-dihydroxy-3-methylpentanoate (2,3-dihydroxy-3-methylvalerate) into 2-oxo-3-methylpentanoate (2-oxo-3-methylvalerate) and of (2R)-2,3-dihydroxy-3-methylbutanoate (2,3-dihydroxyisovalerate) into 2-oxo-3-methylbutanoate (2-oxoisovalerate), the penultimate precursor to L-isoleucine and L-valine, respectively. The sequence is that of Dihydroxy-acid dehydratase from Bacillus cereus (strain 03BB102).